The chain runs to 1058 residues: Ubiquitin-like modifier-activating enzyme 1 (1058 aa).

The segment at 1-46 (MSSSPLSKKRRVSGPDPKPGSNCSPAQSALSEVSSVPTNGMAKNGS) is disordered. Ser-2 carries the N-acetylserine modification. Phosphoserine is present on residues Ser-4, Ser-13, Ser-21, Ser-24, and Ser-46. Over residues 21–38 (SNCSPAQSALSEVSSVPT) the composition is skewed to polar residues. A Phosphotyrosine modification is found at Tyr-55. 2 consecutive repeat copies span residues 63-199 (GHEA…GQLF) and 459-611 (GSDF…QVVI). Positions 63–611 (GHEAMKMLQT…GTKGNVQVVI (549 aa)) are 2 approximate repeats. ATP is bound by residues Ala-478, Asp-504, Arg-515, Lys-528, and 576 to 577 (DN). Position 528 is an N6-succinyllysine (Lys-528). The active-site Glycyl thioester intermediate is the Cys-632. The residue at position 671 (Lys-671) is an N6-acetyllysine. Residue Thr-800 is modified to Phosphothreonine. 4 positions are modified to phosphoserine: Ser-810, Ser-816, Ser-820, and Ser-835. The residue at position 980 (Lys-980) is an N6-acetyllysine.

It belongs to the ubiquitin-activating E1 family. In terms of assembly, monomer. Interacts with GAN (via BTB domain). ISGylated. In terms of tissue distribution, ubiquitously expressed. In testis, expressed in A spermatogonia and spermatids but at very low levels in pachytene spermatocytes.

It localises to the cytoplasm. The protein localises to the mitochondrion. The protein resides in the nucleus. The catalysed reaction is ATP + ubiquitin + [E1 ubiquitin-activating enzyme]-L-cysteine = AMP + diphosphate + S-ubiquitinyl-[E1 ubiquitin-activating enzyme]-L-cysteine.. It participates in protein modification; protein ubiquitination. Its function is as follows. Catalyzes the first step in ubiquitin conjugation to mark cellular proteins for degradation through the ubiquitin-proteasome system. Activates ubiquitin by first adenylating its C-terminal glycine residue with ATP, and thereafter linking this residue to the side chain of a cysteine residue in E1, yielding a ubiquitin-E1 thioester and free AMP. Essential for the formation of radiation-induced foci, timely DNA repair and for response to replication stress. Promotes the recruitment of TP53BP1 and BRCA1 at DNA damage sites. The chain is Ubiquitin-like modifier-activating enzyme 1 (Uba1) from Mus musculus (Mouse).